A 125-amino-acid chain; its full sequence is Small ribosomal subunit protein uS13 (125 aa).

Residues 95 to 125 (GLPVNGQRTRTNARTRKGGKKTVANKKKVTK) form a disordered region. Basic residues predominate over residues 105-125 (TNARTRKGGKKTVANKKKVTK).

The protein belongs to the universal ribosomal protein uS13 family. As to quaternary structure, part of the 30S ribosomal subunit. Forms a loose heterodimer with protein S19. Forms two bridges to the 50S subunit in the 70S ribosome.

Functionally, located at the top of the head of the 30S subunit, it contacts several helices of the 16S rRNA. In the 70S ribosome it contacts the 23S rRNA (bridge B1a) and protein L5 of the 50S subunit (bridge B1b), connecting the 2 subunits; these bridges are implicated in subunit movement. Contacts the tRNAs in the A and P-sites. The sequence is that of Small ribosomal subunit protein uS13 from Leptospira borgpetersenii serovar Hardjo-bovis (strain L550).